A 63-amino-acid polypeptide reads, in one-letter code: Large ribosomal subunit protein bL35 (63 aa).

It belongs to the bacterial ribosomal protein bL35 family.

The polypeptide is Large ribosomal subunit protein bL35 (Campylobacter jejuni subsp. jejuni serotype O:2 (strain ATCC 700819 / NCTC 11168)).